Reading from the N-terminus, the 227-residue chain is ATP-dependent dethiobiotin synthetase BioD (227 aa).

Residue 13–18 participates in ATP binding; that stretch reads DVGKTV. Thr17 provides a ligand contact to Mg(2+). Residue Lys38 is part of the active site. Residues Asp55, 116 to 119, and 176 to 177 each bind ATP; these read EGAG and NR. Mg(2+) is bound by residues Asp55 and Glu116.

This sequence belongs to the dethiobiotin synthetase family. Homodimer. Requires Mg(2+) as cofactor.

It localises to the cytoplasm. It catalyses the reaction (7R,8S)-7,8-diammoniononanoate + CO2 + ATP = (4R,5S)-dethiobiotin + ADP + phosphate + 3 H(+). It participates in cofactor biosynthesis; biotin biosynthesis; biotin from 7,8-diaminononanoate: step 1/2. Its function is as follows. Catalyzes a mechanistically unusual reaction, the ATP-dependent insertion of CO2 between the N7 and N8 nitrogen atoms of 7,8-diaminopelargonic acid (DAPA, also called 7,8-diammoniononanoate) to form a ureido ring. In Aliivibrio salmonicida (strain LFI1238) (Vibrio salmonicida (strain LFI1238)), this protein is ATP-dependent dethiobiotin synthetase BioD.